The primary structure comprises 287 residues: Pyridoxal 5'-phosphate synthase subunit PdxS (287 aa).

Aspartate 21 is a D-ribose 5-phosphate binding site. The Schiff-base intermediate with D-ribose 5-phosphate role is filled by lysine 78. Glycine 150 lines the D-ribose 5-phosphate pocket. D-glyceraldehyde 3-phosphate is bound at residue arginine 162. Residues glycine 211 and 232-233 contribute to the D-ribose 5-phosphate site; that span reads GS.

Belongs to the PdxS/SNZ family. In the presence of PdxT, forms a dodecamer of heterodimers.

It catalyses the reaction aldehydo-D-ribose 5-phosphate + D-glyceraldehyde 3-phosphate + L-glutamine = pyridoxal 5'-phosphate + L-glutamate + phosphate + 3 H2O + H(+). It participates in cofactor biosynthesis; pyridoxal 5'-phosphate biosynthesis. Functionally, catalyzes the formation of pyridoxal 5'-phosphate from ribose 5-phosphate (RBP), glyceraldehyde 3-phosphate (G3P) and ammonia. The ammonia is provided by the PdxT subunit. Can also use ribulose 5-phosphate and dihydroxyacetone phosphate as substrates, resulting from enzyme-catalyzed isomerization of RBP and G3P, respectively. The chain is Pyridoxal 5'-phosphate synthase subunit PdxS from Francisella tularensis subsp. tularensis (strain FSC 198).